Consider the following 388-residue polypeptide: Protein TsgA homolog (388 aa).

The next 12 membrane-spanning stretches (helical) occupy residues 11-31 (WISF…GMIM), 50-70 (TFLN…IEII), 77-97 (IFSF…NSIF), 101-121 (INMF…TFII), 133-153 (LLLL…IVTA), 160-180 (IIWY…FLLT), 206-226 (VFLL…FISW), 244-264 (SLVS…SFII), 268-288 (NLYR…YCFI), 298-318 (YIII…ITLA), 332-352 (LILL…SPIV), and 360-380 (TLIS…LIYF).

Belongs to the major facilitator superfamily. TsgA family.

Its subcellular location is the cell membrane. The polypeptide is Protein TsgA homolog (Buchnera aphidicola subsp. Acyrthosiphon pisum (strain Tuc7)).